Here is a 109-residue protein sequence, read N- to C-terminus: Ycf20-like protein (109 aa).

The protein belongs to the ycf20 family.

The protein is Ycf20-like protein of Synechocystis sp. (strain ATCC 27184 / PCC 6803 / Kazusa).